Here is a 347-residue protein sequence, read N- to C-terminus: S-adenosylmethionine:tRNA ribosyltransferase-isomerase (347 aa).

Belongs to the QueA family. In terms of assembly, monomer.

The protein localises to the cytoplasm. The catalysed reaction is 7-aminomethyl-7-carbaguanosine(34) in tRNA + S-adenosyl-L-methionine = epoxyqueuosine(34) in tRNA + adenine + L-methionine + 2 H(+). The protein operates within tRNA modification; tRNA-queuosine biosynthesis. Functionally, transfers and isomerizes the ribose moiety from AdoMet to the 7-aminomethyl group of 7-deazaguanine (preQ1-tRNA) to give epoxyqueuosine (oQ-tRNA). This chain is S-adenosylmethionine:tRNA ribosyltransferase-isomerase, found in Streptococcus thermophilus (strain ATCC BAA-491 / LMD-9).